We begin with the raw amino-acid sequence, 72 residues long: Arrestin-E (72 aa).

It belongs to the arrestin family. Adrenal, cerebral cortex, heart, hypothalamus, intestine, liver, lung, pituitary, retina and testis.

This Rattus norvegicus (Rat) protein is Arrestin-E (Ear).